The following is a 741-amino-acid chain: MATNLSVIMILTFALWVTNPLHELQSTAAFSQTTEKINSNWESGINVDVAVTMQRHHLQQLFYRYGENDSLSVEGFRKLLQNIGIDKIKRVHIHHDHERHSDHERHSDHERHSHRGHAAAGKNSRKAFCPDLDSDNSGKNPNTSQGKGSRPAEHVNGRRNGKESASSSEVTSAVYNTVSEGTHFLETIETPKPGRRTKDINPSTPPSITEKSRVGRLSRLARRKGNDSVSEPRKSFMYSRTSNDNIQECFNATKLLTSHGMSVQALLNATEFNYLCPAIINQIDARSCLIHTASEKKAEIPPKTYSLQIAWLGGFIAISIISFLSLLGVILVPLMNRVFFKFLLSFLVALAVGTLSGDALLHLLPHSHASHHHSHSHEEPAMEMKRGPLFSHLSAQNLEESSYFDSTWKGLTALGGLYFMFLVEHVLTLIKQFKDKKKKNQKKPENDEDVESKKQLSKYESQLSTNEEKVDTGERPESYLQADSQEPSPFDSQQPTLLEEEEVMIAHAHPQEVYNEYVPRGCKNKCHSHFHDTLGQSDDLIHHHHDYHHILHHHHHQNHHPHSHSQRYSREELKDAGIATLAWMVIMGDGLHNFSDGLAIGAAFTEGLSSGLSTSVAVFCHELPHELGDFAVLLKAGMTVKQAVLYNALSAMLAYLGMATGIFIGHYAENVSMWIFALTAGLFMYVALVDMVPEMLHNDASDHGCSRWGYFFLQNAGILLGFGIMLLISIFEHKIVFRINF.

An N-terminal signal peptide occupies residues 1–20 (MATNLSVIMILTFALWVTNP). Topologically, residues 21-311 (LHELQSTAAF…PKTYSLQIAW (291 aa)) are extracellular. The N-linked (GlcNAc...) asparagine glycan is linked to Asn-68. Residues 95–111 (HDHERHSDHERHSDHER) show a composition bias toward basic and acidic residues. 2 disordered regions span residues 95–172 (HDHE…EVTS) and 189–213 (ETPK…EKSR). A compositionally biased stretch (polar residues) spans 135–147 (DNSGKNPNTSQGK). N-linked (GlcNAc...) asparagine glycosylation is present at Asn-142. A compositionally biased stretch (basic and acidic residues) spans 150–162 (RPAEHVNGRRNGK). Residues 163–172 (ESASSSEVTS) are compositionally biased toward low complexity. Positions 200–209 (INPSTPPSIT) are enriched in polar residues. 3 N-linked (GlcNAc...) asparagine glycosylation sites follow: Asn-226, Asn-251, and Asn-268. A helical transmembrane segment spans residues 312–332 (LGGFIAISIISFLSLLGVILV). Residues 333–341 (PLMNRVFFK) are Cytoplasmic-facing. A helical membrane pass occupies residues 342 to 362 (FLLSFLVALAVGTLSGDALLH). At 363–409 (LLPHSHASHHHSHSHEEPAMEMKRGPLFSHLSAQNLEESSYFDSTWK) the chain is on the extracellular side. Residues 410–430 (GLTALGGLYFMFLVEHVLTLI) form a helical membrane-spanning segment. The Cytoplasmic segment spans residues 431–643 (KQFKDKKKKN…LKAGMTVKQA (213 aa)). The tract at residues 434–494 (KDKKKKNQKK…QEPSPFDSQQ (61 aa)) is disordered. Residues 450-475 (VESKKQLSKYESQLSTNEEKVDTGER) are a coiled coil. Phosphoserine is present on residues Ser-457 and Ser-464. Residues 466–477 (NEEKVDTGERPE) show a composition bias toward basic and acidic residues. Polar residues predominate over residues 481–494 (QADSQEPSPFDSQQ). Residues 644 to 664 (VLYNALSAMLAYLGMATGIFI) form a helical membrane-spanning segment. Residues 665-672 (GHYAENVS) lie on the Extracellular side of the membrane. A glycan (N-linked (GlcNAc...) asparagine) is linked at Asn-670. Residues 673–693 (MWIFALTAGLFMYVALVDMVP) traverse the membrane as a helical segment. Residues 694–710 (EMLHNDASDHGCSRWGY) lie on the Cytoplasmic side of the membrane. Residues 711 to 731 (FFLQNAGILLGFGIMLLISIF) form a helical membrane-spanning segment. Residues 732 to 741 (EHKIVFRINF) are Extracellular-facing.

This sequence belongs to the ZIP transporter (TC 2.A.5) family. As to quaternary structure, interacts with SLC39A10; which triggers cells to undergo EMT and mitosis. Found in a complex with SLC39A6, SLC39A10 and with the 'Ser-727' phosphorylated form of STAT3 throughout mitosis. Found in a complex with SLC39A6, SLC39A10 and with NCAM1; this complex controls NCAM1 phosphorylation and integration into focal adhesion complexes during epithelial-to-mesenchymal transition (EMT). Found in a complex with SLC39A6, SLC39A10 and with GSK3B that controls NCAM1 phosphorylation. In terms of processing, cleaved on the N-terminus before locating to the plasma membrane. N-glycosylated. Post-translationally, phosphorylated by ZAP70 in response to TCR stimulation leading to its activation. As to expression, expressed in the endothelial cells of the brain capillaries.

It localises to the cell membrane. It is found in the cell projection. The protein localises to the lamellipodium membrane. The protein resides in the membrane raft. Its subcellular location is the apical cell membrane. The catalysed reaction is Zn(2+)(in) = Zn(2+)(out). In terms of biological role, zinc-influx transporter which plays a role in zinc homeostasis and in the induction of epithelial-to-mesenchymal transition (EMT). When associated with SLC39A10, the heterodimer formed by SLC39A10 and SLC39A6 mediates cellular zinc uptake to trigger cells to undergo epithelial- to-mesenchymal transition (EMT). The SLC39A10-SLC39A6 heterodimer also controls NCAM1 phosphorylation and its integration into focal adhesion complexes during EMT. Zinc influx inactivates GSK3B, enabling unphosphorylated SNAI1 in the nucleus to down-regulate adherence genes such as CDH1, causing loss of cell adherence. In addition, the SLC39A10-SLC39A6 heterodimer plays an essentiel role in initiating mitosis by importing zinc into cells to initiate a pathway resulting in the onset of mitosis. Participates in the T-cell receptor signaling regulation by mediating cellular zinc uptake into activated lymphocytes. Regulates the zinc influx necessary for proper meiotic progression to metaphase II (MII) that allows the oocyte-to-egg transition. This Rattus norvegicus (Rat) protein is Zinc transporter ZIP6.